Consider the following 1269-residue polypeptide: MVEPGQDLLLAALSESGISPNDLFDVDGGDAGLATPTPPSVQQQQPPSTTTFVLNQINQLPTLGSTIVMTKTPPATTNRQTITLTKFIQTTANTRPSVSAPAVRNAIPPAPAKDQVQLKDLLKNNSLNELMKLKPPANIAQPVATAAADVSNGAVKKESSNKEVARVWINDMKMRSFSPTMKVPVVREEDEPEEEDEEEMGHAETYAEYMPIKLKIGLRHPDAVVETSSLSSVTPPDVWYKTSISEETIDNGWLSALQLEAVTYAAQQHETFLPNGDRAGFLIGDGAGVGKGRTIAGIIYENYLLSRKRALWFSVSNDLKYDAERDLRDIGAKNILVHSLNKFKYGKISSKHNGSVKKGVIFATYSSLIGESQSGGKYKTRLKQLLHWCGDDFDGVIVFDECHKAKNLCPVGSSKPTKTGLAVLELQNKLPKARVVYASATGASEPRNMAYMNRLGIWGEGTPFREFSDFIQAVERRGVGAMEIVAMDMKLRGMYIARQLSFTGVTFKIEEVLLSQSYVKMYNKAVKLWVIARERFQQAADLIDAEQRMKKSMWGQFWSAHQRFFKYLCIASKVKRVVQLAREEIKNGKCVVIGLQSTGEARTLEALEEGGGELNDFVSTAKGVLQSLIEKHFPAPDRKKLYSLLGIDLTAPSNNSSPRDSAKKARKIGGLTGSSSDDSGSESDVSDNEESDYESSKNMSSGDDDDFNPFRDDNSSLITSQDAVERAQQMKKDLLDKLEKLAEDLPPNTLDELIDELGGPENVAEMTGRKGRVVSNDDGSISYESRSELDVPVEILNITEKQRFMDGDKNIAIISEAASSGISLQADRRAKNQRRRVHMTLELPWSADRAIQQFGRTHRSNQVTAPEYVFLISELAGEQRFASIVAKRLESLGALTHGDRRATESRDLSRFNFDNKYGRNALEIVMKSIVNLDSPMVSPPPDYPGEFFKDVRQGLIGVGLINVEDRSGILTLDKDYNNIGKFLNRILGMEVHQQNALFQYFADTLTAVVQNAKKNGRYDMGILDLGSGDEKVRKSDVKKFLTPGYSTSGHVELYTISVERGMSWDEATKIWAELTGPDDGFYLSLQIRNNKKTAILVKEVNPKKKLFLIYRPNTGKQLKLEIYADLKKKYKKVVSDDALVHWLDQYNSSADTCTHAYWRGNCKKASLGLVCEIGLRCRTYYVLCGSVLSVWTKVEGVLASVSGTNVKMQIVRLRTEDGQRIVGLIIPANCVSPLVNLLSTSDQSQQLAVQQKQLWQQHHPQSITNLSNV.

The tract at residues 21-47 is disordered; sequence NDLFDVDGGDAGLATPTPPSVQQQQPP. At Lys113 the chain carries N6-acetyllysine. Phosphoserine occurs at positions 126 and 178. Lys377 carries the post-translational modification N6-acetyllysine. A disordered region spans residues 652–725; sequence PSNNSSPRDS…SLITSQDAVE (74 aa). Phosphoserine is present on residues Ser656, Ser657, and Ser661. Residues 679–693 are compositionally biased toward acidic residues; sequence SGSESDVSDNEESDY. 2 positions are modified to phosphoserine: Ser700 and Ser701. A coiled-coil region spans residues 719–746; it reads TSQDAVERAQQMKKDLLDKLEKLAEDLP. The residue at position 1098 (Lys1098) is an N6-acetyllysine. Ser1262 is subject to Phosphoserine.

Belongs to the SBNO family.

The protein localises to the nucleus. In terms of biological role, plays a crucial role in the regulation of neural stem cells (NSCs) proliferation. Enhances the phosphorylation of GSK3B through the PI3K-Akt signaling pathway, thereby upregulating the Wnt/beta-catenin signaling pathway and promoting the proliferation of NSCs. Improves ischemic stroke recovery while inhibiting neuroinflammation through small extracellular vesicles (sEVs)-mediated mechanism. Enhances the secretion of sEVs from NSCs, which in turn inhibit both the MAPK and NF-kappaB pathways in microglia. This inhibition suppresses the pro-inflammatory M1 polarization of microglia, promoting a shift towards the M2 anti-inflammatory phenotype, which is beneficial for reducing neuroinflammation. This Rattus norvegicus (Rat) protein is Protein strawberry notch homolog 1 (Sbno1).